Reading from the N-terminus, the 2039-residue chain is Calcium-channel protein CCH1 (2039 aa).

Disordered regions lie at residues 1–171 (MQGR…PPRS) and 206–288 (PQLK…PQKE). Positions 64-80 (STEEKKGDEYNGNDKDS) are enriched in basic and acidic residues. N-linked (GlcNAc...) asparagine glycosylation is present at Asn98. Composition is skewed to low complexity over residues 122–132 (SPSTKSAKSSS) and 147–164 (FSSYSRSSSRRVSNSPSS). Basic and acidic residues predominate over residues 209–226 (KSEKSRPVSDVGEDRGEG). Residues Asn257 and Asn269 are each glycosylated (N-linked (GlcNAc...) asparagine). The span at 271-281 (SRKKPSPKFFH) shows a compositional bias: basic residues. At Ser284 the chain carries Phosphoserine. Residues 346 to 366 (YSLLYNTLLTFYAILLAIRTY) traverse the membrane as a helical segment. Residue Asn379 is glycosylated (N-linked (GlcNAc...) asparagine). A helical membrane pass occupies residues 384–404 (FIFILSACFTGNDIAKIIAFG). Asn559 carries an N-linked (GlcNAc...) asparagine glycan. 3 helical membrane-spanning segments follow: residues 563 to 583 (MLVYFWIFFGILGVQIFQGSF), 658 to 678 (IVNSMELVFVIMSANTFTDLM), and 691 to 711 (LFFIVCIFVLTIWLLNLLIAV). Asn754 and Asn760 each carry an N-linked (GlcNAc...) asparagine glycan. 3 helical membrane passes run 766–786 (LAIYSHVEFIFVILIICDIGM), 809–829 (ISIVLFIESLARLVLYLPNMW), and 841–861 (FIISIITLVISCLAVEGVLGH). Asn882 and Asn900 each carry an N-linked (GlcNAc...) asparagine glycan. 2 helical membrane passes run 904–924 (FYFFFTFLVAIIMAVYFEGVI) and 942–962 (SFLSLFIIGSTENWTDILYAL). N-linked (GlcNAc...) asparagine glycosylation is present at Asn968. Residues 978 to 998 (FFIIWFLLSNSVILNIFIALI) traverse the membrane as a helical segment. Asn1153 is a glycosylation site (N-linked (GlcNAc...) asparagine). A helical membrane pass occupies residues 1207 to 1227 (VFVFIFALATILLIVCSCYVT). Residue Asn1240 is glycosylated (N-linked (GlcNAc...) asparagine). 2 consecutive transmembrane segments (helical) span residues 1247–1267 (CAFIGAFSIEFIVKTVADGFI) and 1277–1297 (PWNFIDFCVLISMWINLIAYL). N-linked (GlcNAc...) asparagine glycosylation is present at Asn1302. 2 consecutive transmembrane segments (helical) span residues 1340 to 1360 (IFEAGLISLSLLFPFTVWGLS) and 1408 to 1428 (FASAFSSLYQIISLEGWVDLL). N-linked (GlcNAc...) asparagine glycosylation occurs at Asn1433. The next 5 helical transmembrane spans lie at 1452-1472 (FLVLFNFLSMVFILNLFVSFI), 1529-1549 (NFYYASFLQVVLYLHIIMLLS), 1554-1574 (PGNLIGYQGVYFMFSTSVFLI), 1596-1616 (IRLSIIIIAFIMNAVAFHVPA), and 1618-1638 (HYWFHNIKGFFLLVIFLFIIP). A glycan (N-linked (GlcNAc...) asparagine) is linked at Asn1640. Residues 1654–1674 (LPPILSLTYTWGVLFLVYAIA) form a helical membrane-spanning segment. 2 N-linked (GlcNAc...) asparagine glycosylation sites follow: Asn1687 and Asn1732. A helical membrane pass occupies residues 1748 to 1768 (LMSWNIISMYIFVNMFVSLII). 2 N-linked (GlcNAc...) asparagine glycosylation sites follow: Asn1770 and Asn1785. The region spanning 1787-1822 (SEIKKYIEAWSKFDTDGTGELELSYLPRIMHSFDGP) is the EF-hand domain. Residues 2011–2039 (PRMNQDSTMEPPEEPIDNNDDSANDLIDR) are disordered. Acidic residues predominate over residues 2021 to 2033 (PPEEPIDNNDDSA).

Belongs to the calcium channel alpha-1 subunit (TC 1.A.1.11) family. Interacts with MID1 to form a Ca(2+) influx channel.

It localises to the cell membrane. In terms of biological role, voltage-gated, high-affinity calcium channel that functions together with MID1 to mediate calcium entry into cells. Required during conditions of environmental stress. This is Calcium-channel protein CCH1 (CCH1) from Saccharomyces cerevisiae (strain ATCC 204508 / S288c) (Baker's yeast).